The sequence spans 247 residues: UPF0309 protein Teth39_1980 (247 aa).

In terms of domain architecture, SIS spans 31–213; sequence IANSLLKEED…EAEIVFIMIK (183 aa).

It belongs to the UPF0309 family.

In Thermoanaerobacter pseudethanolicus (strain ATCC 33223 / 39E) (Clostridium thermohydrosulfuricum), this protein is UPF0309 protein Teth39_1980.